Consider the following 271-residue polypeptide: NH(3)-dependent NAD(+) synthetase (271 aa).

43–50 contacts ATP; that stretch reads GISGGQDS. Residue Asp49 coordinates Mg(2+). A deamido-NAD(+)-binding site is contributed by Arg137. Residue Thr157 participates in ATP binding. Glu162 serves as a coordination point for Mg(2+). Residues Lys170 and Asp177 each contribute to the deamido-NAD(+) site. The ATP site is built by Lys186 and Thr208. 257–258 lines the deamido-NAD(+) pocket; the sequence is HK.

Belongs to the NAD synthetase family. Homodimer.

It catalyses the reaction deamido-NAD(+) + NH4(+) + ATP = AMP + diphosphate + NAD(+) + H(+). The protein operates within cofactor biosynthesis; NAD(+) biosynthesis; NAD(+) from deamido-NAD(+) (ammonia route): step 1/1. Its function is as follows. Catalyzes the ATP-dependent amidation of deamido-NAD to form NAD. Uses ammonia as a nitrogen source. The sequence is that of NH(3)-dependent NAD(+) synthetase from Exiguobacterium sibiricum (strain DSM 17290 / CCUG 55495 / CIP 109462 / JCM 13490 / 255-15).